Reading from the N-terminus, the 257-residue chain is Probable ssDNA-binding protein (257 aa).

The disordered stretch occupies residues 222 to 257 (AFMEGRENKDDDAKSGNSNAGSQKGIDQEAASDLDD). Basic and acidic residues predominate over residues 225 to 235 (EGRENKDDDAK).

Its function is as follows. Required during DNA replication. Displaced viral DNA strands are transiently coated with the ssDNA-binding protein. It is then probably removed by the replisome that performs lagging strand synthesis or during the events that lead up to the recombination process. This Escherichia phage T5 (Enterobacteria phage T5) protein is Probable ssDNA-binding protein (D11).